Here is a 758-residue protein sequence, read N- to C-terminus: MAQRKNAKSSGNSSSSGSGSGSTSAGSSSPGARRETKHGGHKNGRKGGLSGTSFFTWFMVIALLGVWTSVAVVWFDLVDYEEVLGKLGIYDADGDGDFDVDDAKVLLGLKERSTSEPAVPPEEAEPHTEPEEQVPVEAEPQNIEDEAKEQIQSLLHEMVHAEHVEGEDLQQEDGPTGEPQQEDDEFLMATDVDDRFETLEPEVSHEETEHSYHVEETVSQDCNQDMEEMMSEQENPDSSEPVVEDERLHHDTDDVTYQVYEEQAVYEPLENEGIEITEVTAPPEDNPVEDSQVIVEEVSIFPVEEQQEVPPETNRKTDDPEQKAKVKKKKPKLLNKFDKTIKAELDAAEKLRKRGKIEEAVNAFKELVRKYPQSPRARYGKAQCEDDLAEKRRSNEVLRGAIETYQEVASLPDVPADLLKLSLKRRSDRQQFLGHMRGSLLTLQRLVQLFPNDTSLKNDLGVGYLLIGDNDNAKKVYEEVLSVTPNDGFAKVHYGFILKAQNKIAESIPYLKEGIESGDPGTDDGRFYFHLGDAMQRVGNKEAYKWYELGHKRGHFASVWQRSLYNVNGLKAQPWWTPKETGYTELVKSLERNWKLIRDEGLAVMDKAKGLFLPEDENLREKGDWSQFTLWQQGRRNENACKGAPKTCTLLEKFPETTGCRRGQIKYSIMHPGTHVWPHTGPTNCRLRMHLGLVIPKEGCKIRCANETKTWEEGKVLIFDDSFEHEVWQDASSFRLIFIVDVWHPELTPQQRRSLPAI.

The disordered stretch occupies residues 1 to 46; it reads MAQRKNAKSSGNSSSSGSGSGSTSAGSSSPGARRETKHGGHKNGRK. Residues 1 to 53 are Cytoplasmic-facing; sequence MAQRKNAKSSGNSSSSGSGSGSTSAGSSSPGARRETKHGGHKNGRKGGLSGTS. Residues 9 to 31 show a composition bias toward low complexity; that stretch reads SSGNSSSSGSGSGSTSAGSSSPG. A Phosphoserine modification is found at Ser14. A helical; Signal-anchor for type II membrane protein transmembrane segment spans residues 54-74; sequence FFTWFMVIALLGVWTSVAVVW. Leu64 carries an N-linked (GlcNAc...) asparagine glycan. At 75–758 the chain is on the lumenal side; that stretch reads FDLVDYEEVL…PQQRRSLPAI (684 aa). Asp91, Asp93, Asp95, Asp97, and Asp102 together coordinate Ca(2+). Disordered regions lie at residues 111–140 and 304–324; these read ERST…EAEP and EEQQ…EQKA. Residues 313-324 show a composition bias toward basic and acidic residues; sequence TNRKTDDPEQKA. Residues 341–374 form a TPR 1 repeat; sequence IKAELDAAEKLRKRGKIEEAVNAFKELVRKYPQS. Asn452 carries N-linked (GlcNAc...) asparagine glycosylation. TPR repeat units follow at residues 454 to 487, 489 to 521, and 525 to 557; these read TSLK…TPND, FAKV…GDPG, and GRFY…GHFA. A 2-oxoglutarate-binding site is contributed by Trp625. Cys641 and Cys648 form a disulfide bridge. Ser668 is a binding site for 2-oxoglutarate. Residue His679 coordinates Fe cation. 688-690 provides a ligand contact to 2-oxoglutarate; sequence RMH. N-linked (GlcNAc...) asparagine glycosylation is present at Asn706. His725 contacts Fe cation. Arg735 is a binding site for 2-oxoglutarate.

Belongs to the aspartyl/asparaginyl beta-hydroxylase family. Monomer. Isoform 8 interacts with ORAI1 and STIM1. Isoform 4 interacts with CASQ2. Fe cation is required as a cofactor. As to expression, isoform 1 is detected in all tissues tested. Isoform 8 is mainly expressed in pancreas, heart, brain, kidney and liver. Isoform 8 is expressed in kidney (at protein level).

The protein localises to the endoplasmic reticulum membrane. It is found in the sarcoplasmic reticulum membrane. It catalyses the reaction L-aspartyl-[protein] + 2-oxoglutarate + O2 = 3-hydroxy-L-aspartyl-[protein] + succinate + CO2. In terms of biological role, specifically hydroxylates an Asp or Asn residue in certain epidermal growth factor-like (EGF) domains of a number of proteins. Membrane-bound Ca(2+)-sensing protein, which is a structural component of the ER-plasma membrane junctions. Isoform 8 regulates the activity of Ca(+2) released-activated Ca(+2) (CRAC) channels in T-cells. The polypeptide is Aspartyl/asparaginyl beta-hydroxylase (ASPH) (Homo sapiens (Human)).